We begin with the raw amino-acid sequence, 130 residues long: UPF0102 protein RSc3265 (130 aa).

The protein belongs to the UPF0102 family.

The chain is UPF0102 protein RSc3265 from Ralstonia nicotianae (strain ATCC BAA-1114 / GMI1000) (Ralstonia solanacearum).